Consider the following 103-residue polypeptide: UPF0235 protein RL4503 (103 aa).

It belongs to the UPF0235 family.

The chain is UPF0235 protein RL4503 from Rhizobium johnstonii (strain DSM 114642 / LMG 32736 / 3841) (Rhizobium leguminosarum bv. viciae).